Reading from the N-terminus, the 714-residue chain is Phosphoribosylformylglycinamidine synthase subunit PurL (714 aa).

H34 is a catalytic residue. Y37 is an ATP binding site. Residue E78 coordinates Mg(2+). Substrate contacts are provided by residues 79 to 82 (SHNH) and R101. The Proton acceptor role is filled by H80. D102 contacts Mg(2+). Q226 is a substrate binding site. D254 serves as a coordination point for Mg(2+). 298 to 300 (ESQ) contributes to the substrate binding site. ATP contacts are provided by D474 and G511. Mg(2+) is bound at residue N512. S514 provides a ligand contact to substrate.

Belongs to the FGAMS family. In terms of assembly, monomer. Part of the FGAM synthase complex composed of 1 PurL, 1 PurQ and 2 PurS subunits.

Its subcellular location is the cytoplasm. It carries out the reaction N(2)-formyl-N(1)-(5-phospho-beta-D-ribosyl)glycinamide + L-glutamine + ATP + H2O = 2-formamido-N(1)-(5-O-phospho-beta-D-ribosyl)acetamidine + L-glutamate + ADP + phosphate + H(+). The protein operates within purine metabolism; IMP biosynthesis via de novo pathway; 5-amino-1-(5-phospho-D-ribosyl)imidazole from N(2)-formyl-N(1)-(5-phospho-D-ribosyl)glycinamide: step 1/2. Its function is as follows. Part of the phosphoribosylformylglycinamidine synthase complex involved in the purines biosynthetic pathway. Catalyzes the ATP-dependent conversion of formylglycinamide ribonucleotide (FGAR) and glutamine to yield formylglycinamidine ribonucleotide (FGAM) and glutamate. The FGAM synthase complex is composed of three subunits. PurQ produces an ammonia molecule by converting glutamine to glutamate. PurL transfers the ammonia molecule to FGAR to form FGAM in an ATP-dependent manner. PurS interacts with PurQ and PurL and is thought to assist in the transfer of the ammonia molecule from PurQ to PurL. The chain is Phosphoribosylformylglycinamidine synthase subunit PurL from Methanothermobacter thermautotrophicus (strain ATCC 29096 / DSM 1053 / JCM 10044 / NBRC 100330 / Delta H) (Methanobacterium thermoautotrophicum).